Reading from the N-terminus, the 237-residue chain is Eukaryotic translation initiation factor 3 subunit K (237 aa).

Residues 44 to 219 (CDCNANRALL…EARKAEIRED (176 aa)) enclose the PCI domain.

The protein belongs to the eIF-3 subunit K family. As to quaternary structure, component of the eukaryotic translation initiation factor 3 (eIF-3) complex.

The protein resides in the cytoplasm. Component of the eukaryotic translation initiation factor 3 (eIF-3) complex, which is involved in protein synthesis of a specialized repertoire of mRNAs and, together with other initiation factors, stimulates binding of mRNA and methionyl-tRNAi to the 40S ribosome. The eIF-3 complex specifically targets and initiates translation of a subset of mRNAs involved in cell proliferation. This Neurospora crassa (strain ATCC 24698 / 74-OR23-1A / CBS 708.71 / DSM 1257 / FGSC 987) protein is Eukaryotic translation initiation factor 3 subunit K.